The primary structure comprises 332 residues: Aquaporin Lacbi1:317173 (332 aa).

Positions 1-20 (MSGQHQITEQSSRNPLSRVS) are enriched in polar residues. The interval 1 to 45 (MSGQHQITEQSSRNPLSRVSTLLPEKPLSPTSTYAGTQKHPEAPR) is disordered. Residues 1-66 (MSGQHQITEQ…RNAIRKPMAE (66 aa)) are Cytoplasmic-facing. Residues 67–87 (FFGVALLIIFGAGSACQVVLS) form a helical membrane-spanning segment. The Extracellular portion of the chain corresponds to 88–100 (TNPDVASSARGSF). The chain crosses the membrane as a helical span at residues 101-121 (LSINFGWAIGIAMGVWVSGGI). The Cytoplasmic segment spans residues 122 to 144 (SGGHINPAITIAMATYRGFPWRK). An NPA 1 motif is present at residues 127-129 (NPA). The helical transmembrane segment at 145–165 (VPSYILAQVLGGVVGAGLVYA) threads the bilayer. Topologically, residues 166 to 199 (NYIHAIDIFEGGHHIRTQATASLFATYALPYMTQ) are extracellular. The helical transmembrane segment at 200–220 (ASCFFSEFLATAVLSMMVFAL) threads the bilayer. Topologically, residues 221–230 (TDKRNHSPTN) are cytoplasmic. The helical transmembrane segment at 231–251 (GLLPFALFILFVGLGASLGME) threads the bilayer. At 252 to 283 (TAYALNPARDFGPRLFLAMAGYGKALFNYRSQ) the chain is on the extracellular side. The short motif at 257–259 (NPA) is the NPA 2 element. A helical transmembrane segment spans residues 284-304 (YWLWAPIIAPVLGAQAGGLLY). Over 305-332 (DTFLNDGDNSPIKWRCASSQEHQLAEVV) the chain is Cytoplasmic.

Belongs to the MIP/aquaporin (TC 1.A.8) family.

It localises to the membrane. The catalysed reaction is H2O(in) = H2O(out). The enzyme catalyses NH4(+)(in) = NH4(+)(out). Water channel required to facilitate the transport of water across membranes. Acts as the most efficient Laccaria water channel. In addition to water, also shows strong ammonium transport activity. May be involved in fungal nitrogen (ammonium) support of the plant host in symbiosis. The sequence is that of Aquaporin Lacbi1:317173 from Laccaria bicolor (strain S238N-H82 / ATCC MYA-4686) (Bicoloured deceiver).